Here is a 61-residue protein sequence, read N- to C-terminus: Small ribosomal subunit protein uS14B (61 aa).

Cys-24, Cys-27, Cys-40, and Cys-43 together coordinate Zn(2+).

The protein belongs to the universal ribosomal protein uS14 family. Zinc-binding uS14 subfamily. Part of the 30S ribosomal subunit. Contacts proteins S3 and S10. Zn(2+) serves as cofactor.

Binds 16S rRNA, required for the assembly of 30S particles and may also be responsible for determining the conformation of the 16S rRNA at the A site. The protein is Small ribosomal subunit protein uS14B of Lactiplantibacillus plantarum (strain ATCC BAA-793 / NCIMB 8826 / WCFS1) (Lactobacillus plantarum).